A 722-amino-acid chain; its full sequence is Phenylalanine ammonia-lyase lenB (722 aa).

Tyrosine 83 acts as the Proton donor/acceptor in catalysis. The interval 117–136 is disordered; it reads LPTDRSSSRPSSRYPHGLRS. A cross-link (5-imidazolinone (Ala-Gly)) is located at residues 190 to 192; it reads ASG. Position 191 is a 2,3-didehydroalanine (Ser) (serine 191). Residues asparagine 247, glutamine 334, arginine 340, asparagine 370, lysine 441, glutamate 469, and asparagine 472 each contribute to the (E)-cinnamate site.

The protein belongs to the PAL/histidase family. Contains an active site 4-methylidene-imidazol-5-one (MIO), which is formed autocatalytically by cyclization and dehydration of residues Ala-Ser-Gly.

The enzyme catalyses L-phenylalanine = (E)-cinnamate + NH4(+). The protein operates within alkaloid biosynthesis. Functionally, phenylalanine ammonia-lyase; part of the gene cluster that mediates the biosynthesis of the ergot alkaloids lentopeptins A and B. Within the pathway, lenB provides the cinnamic acid starter unit for the synthesis of the N-acyldiketopiperazine intermediate by the NRPS lenA. Cinnamic acid is condensed with the Ala-Val-Ala peptide chain by lenA which leads to the N-acyldiketopiperazine intermediate which in turn is converted into lentopeptins A and B by the cytochrome P450 monooxygenase lenC. The chain is Phenylalanine ammonia-lyase lenB from Aspergillus lentulus.